A 119-amino-acid chain; its full sequence is Small ribosomal subunit protein uS13 (119 aa).

The interval 94–119 is disordered; that stretch reads GLPVRGQRTQTNARTRKGPRRGPAGK.

Belongs to the universal ribosomal protein uS13 family. Part of the 30S ribosomal subunit. Forms a loose heterodimer with protein S19. Forms two bridges to the 50S subunit in the 70S ribosome.

In terms of biological role, located at the top of the head of the 30S subunit, it contacts several helices of the 16S rRNA. In the 70S ribosome it contacts the 23S rRNA (bridge B1a) and protein L5 of the 50S subunit (bridge B1b), connecting the 2 subunits; these bridges are implicated in subunit movement. Contacts the tRNAs in the A and P-sites. This chain is Small ribosomal subunit protein uS13, found in Alkalilimnicola ehrlichii (strain ATCC BAA-1101 / DSM 17681 / MLHE-1).